The chain runs to 130 residues: Histone H2B.1 (130 aa).

The segment covering 1–19 has biased composition (basic and acidic residues); sequence MAPKAEKKPASKAPAEKKP. A disordered region spans residues 1-39; that stretch reads MAPKAEKKPASKAPAEKKPAAKKTASATGTKKRSKTRKE. Residues lysine 7 and lysine 8 each carry the N6-acetyllysine; alternate modification. Glycyl lysine isopeptide (Lys-Gly) (interchain with G-Cter in SUMO); alternate cross-links involve residues lysine 7 and lysine 8. Phosphoserine is present on serine 11. An N6-acetyllysine modification is found at lysine 12. Lysine 17 carries the N6-acetyllysine; alternate modification. Lysine 17 is covalently cross-linked (Glycyl lysine isopeptide (Lys-Gly) (interchain with G-Cter in SUMO); alternate). A Glycyl lysine isopeptide (Lys-Gly) (interchain with G-Cter in SUMO) cross-link involves residue lysine 18. Lysine 124 participates in a covalent cross-link: Glycyl lysine isopeptide (Lys-Gly) (interchain with G-Cter in ubiquitin).

The protein belongs to the histone H2B family. As to quaternary structure, the nucleosome is a histone octamer containing two molecules each of H2A, H2B, H3 and H4 assembled in one H3-H4 heterotetramer and two H2A-H2B heterodimers. The octamer wraps approximately 147 bp of DNA. Post-translationally, monoubiquitinated by the UBC2-BRE1 complex to form H2BK123ub1. H2BK123ub1 gives a specific tag for epigenetic transcriptional activation and is also prerequisite for H3K4me and H3K79me formation. H2BK123ub1 also modulates the formation of double-strand breaks during meiosis and is a prerequisite for DNA-damage checkpoint activation. Phosphorylated by STE20 to form H2BS10ph during progression through meiotic prophase. May be correlated with chromosome condensation. In terms of processing, acetylated by GCN5 to form H2BK11ac and H2BK16ac. H2BK16ac can also be formed by ESA1. Acetylation of N-terminal lysines and particularly formation of H2BK11acK16ac has a positive effect on transcription. Post-translationally, sumoylation to form H2BK6su or H2BK7su, and probably also H2BK16su or H2BK17su, occurs preferentially near the telomeres and represses gene transcription.

It localises to the nucleus. The protein localises to the chromosome. In terms of biological role, core component of nucleosome. Nucleosomes wrap and compact DNA into chromatin, limiting DNA accessibility to the cellular machineries which require DNA as a template. Histones thereby play a central role in transcription regulation, DNA repair, DNA replication and chromosomal stability. DNA accessibility is regulated via a complex set of post-translational modifications of histones, also called histone code, and nucleosome remodeling. The protein is Histone H2B.1 (HTB1) of Debaryomyces hansenii (strain ATCC 36239 / CBS 767 / BCRC 21394 / JCM 1990 / NBRC 0083 / IGC 2968) (Yeast).